The chain runs to 908 residues: Protein translocase subunit SecA (908 aa).

Residues glutamine 87, 105 to 109 (GEGKT), and aspartate 513 contribute to the ATP site. Residues 852 to 863 (ARRAQAQHATAE) are compositionally biased toward low complexity. Positions 852-908 (ARRAQAQHATAENQLADDEAEAASPQTVVRDERKVGRNEPCPCGSGKKYKQCHGKID) are disordered. Residues cysteine 892, cysteine 894, cysteine 903, and histidine 904 each coordinate Zn(2+). A compositionally biased stretch (basic residues) spans 898-908 (KKYKQCHGKID).

It belongs to the SecA family. Monomer and homodimer. Part of the essential Sec protein translocation apparatus which comprises SecA, SecYEG and auxiliary proteins SecDF-YajC and YidC. Requires Zn(2+) as cofactor.

The protein localises to the cell inner membrane. The protein resides in the cytoplasm. It catalyses the reaction ATP + H2O + cellular proteinSide 1 = ADP + phosphate + cellular proteinSide 2.. Its function is as follows. Part of the Sec protein translocase complex. Interacts with the SecYEG preprotein conducting channel. Has a central role in coupling the hydrolysis of ATP to the transfer of proteins into and across the cell membrane, serving both as a receptor for the preprotein-SecB complex and as an ATP-driven molecular motor driving the stepwise translocation of polypeptide chains across the membrane. In Vibrio atlanticus (strain LGP32) (Vibrio splendidus (strain Mel32)), this protein is Protein translocase subunit SecA.